The primary structure comprises 320 residues: Nucleotide-binding protein Pcryo_0127 (320 aa).

32–39 (GRSGSGKT) serves as a coordination point for ATP. 82-85 (DIRT) is a GTP binding site.

This sequence belongs to the RapZ-like family.

Its function is as follows. Displays ATPase and GTPase activities. This is Nucleotide-binding protein Pcryo_0127 from Psychrobacter cryohalolentis (strain ATCC BAA-1226 / DSM 17306 / VKM B-2378 / K5).